Consider the following 87-residue polypeptide: Small ribosomal subunit protein uS15 (87 aa).

Residues 1 to 22 (MSEINKAEIVASNARAPSDTGS) form a disordered region.

Belongs to the universal ribosomal protein uS15 family. Part of the 30S ribosomal subunit. Forms a bridge to the 50S subunit in the 70S ribosome, contacting the 23S rRNA.

One of the primary rRNA binding proteins, it binds directly to 16S rRNA where it helps nucleate assembly of the platform of the 30S subunit by binding and bridging several RNA helices of the 16S rRNA. In terms of biological role, forms an intersubunit bridge (bridge B4) with the 23S rRNA of the 50S subunit in the ribosome. The polypeptide is Small ribosomal subunit protein uS15 (Leptothrix cholodnii (strain ATCC 51168 / LMG 8142 / SP-6) (Leptothrix discophora (strain SP-6))).